Here is a 350-residue protein sequence, read N- to C-terminus: MSSKKLRRVGLSPELCDRLSRYQIVNCQHFLSLSPLELMKVTGLSYRGVHELLHTVSKACAPQMQTAYELKTRRSAHLSPAFLSTTLCALDEALHGGVPCGSLTEITGPPGCGKTQFCIMMSVLATLPTSLGGLEGAVVYIDTESAFTAERLVEIAESRFPQYFNTEEKLLLTSSRVHLCRELTCEGLLQRLESLEEEIISKGVKLVIVDSIASVVRKEFDPKLQGNIKERNKFLGKGASLLKYLAGEFSIPVILTNQITTHLSGALPSQADLVSPADDLSLSEGTSGSSCLVAALGNTWGHCVNTRLILQYLDSERRQILIAKSPLAAFTSFVYTIKGEGLVLQGHERP.

The interval M1–S75 is interaction with RAD51C. Residue G108–T115 participates in ATP binding.

This sequence belongs to the RecA family. RAD51 subfamily. As to quaternary structure, part of the BCDX2 complex consisting of RAD51B, RAD51C, RAD51D and XRCC2; the complex has a ring-like structure arranged into a flat disc around a central channel. The BCDX2 subcomplex RAD51B:RAD51C interacts with RAD51. Interacts with SWSAP1; involved in homologous recombination repair. Interacts with HELQ. In terms of processing, phosphorylated on tyrosine residues by BCR-ABL. Expressed in a wide range of tissues.

It localises to the nucleus. Functionally, involved in the homologous recombination repair (HRR) pathway of double-stranded DNA breaks arising during DNA replication or induced by DNA-damaging agents. May promote the assembly of presynaptic RAD51 nucleoprotein filaments. Binds single-stranded DNA and double-stranded DNA and has DNA-dependent ATPase activity. Part of the RAD51 paralog protein complex BCDX2 which acts in the BRCA1-BRCA2-dependent HR pathway. Upon DNA damage, BCDX2 acts downstream of BRCA2 recruitment and upstream of RAD51 recruitment. BCDX2 binds predominantly to the intersection of the four duplex arms of the Holliday junction and to junction of replication forks. The BCDX2 complex was originally reported to bind single-stranded DNA, single-stranded gaps in duplex DNA and specifically to nicks in duplex DNA. The BCDX2 subcomplex RAD51B:RAD51C exhibits single-stranded DNA-dependent ATPase activity suggesting an involvement in early stages of the HR pathway. The sequence is that of DNA repair protein RAD51 homolog 2 (Rad51b) from Mus musculus (Mouse).